The primary structure comprises 273 residues: NAD-dependent protein deacylase (273 aa).

Positions 20 to 272 (RERLRQRIFF…PEFVEKLLKG (253 aa)) constitute a Deacetylase sirtuin-type domain. 48-67 (GAGISAESGIRTFRAADGLW) provides a ligand contact to NAD(+). Tyr92 and Arg95 together coordinate substrate. 129–132 (QNID) contributes to the NAD(+) binding site. Residue His147 is the Proton acceptor of the active site. The Zn(2+) site is built by Cys155 and Cys174. NAD(+) is bound by residues 214-216 (GTS), 240-242 (NLE), and Ala258.

The protein belongs to the sirtuin family. Class III subfamily. The cofactor is Zn(2+).

The protein resides in the cytoplasm. It catalyses the reaction N(6)-acetyl-L-lysyl-[protein] + NAD(+) + H2O = 2''-O-acetyl-ADP-D-ribose + nicotinamide + L-lysyl-[protein]. It carries out the reaction N(6)-succinyl-L-lysyl-[protein] + NAD(+) + H2O = 2''-O-succinyl-ADP-D-ribose + nicotinamide + L-lysyl-[protein]. The enzyme catalyses N(6)-(2-hydroxyisobutanoyl)-L-lysyl-[protein] + NAD(+) + H2O = 2''-O-(2-hydroxyisobutanoyl)-ADP-D-ribose + nicotinamide + L-lysyl-[protein]. NAD-dependent lysine deacetylase that specifically removes acetyl groups on target proteins. Also acts as a protein-lysine deacylase by mediating protein desuccinylation and de-2-hydroxyisobutyrylation. Modulates the activities of several proteins which are inactive in their acylated form. The polypeptide is NAD-dependent protein deacylase (Escherichia coli O6:H1 (strain CFT073 / ATCC 700928 / UPEC)).